Reading from the N-terminus, the 401-residue chain is Phosphoglycerate kinase (401 aa).

Substrate-binding positions include Asp-21–Asn-23, Arg-36, His-59–Arg-62, Arg-119, and Arg-160. ATP is bound by residues Lys-212, Glu-330, and Gly-357–Ser-360.

The protein belongs to the phosphoglycerate kinase family. As to quaternary structure, monomer.

It is found in the cytoplasm. The catalysed reaction is (2R)-3-phosphoglycerate + ATP = (2R)-3-phospho-glyceroyl phosphate + ADP. The protein operates within carbohydrate degradation; glycolysis; pyruvate from D-glyceraldehyde 3-phosphate: step 2/5. The polypeptide is Phosphoglycerate kinase (Limosilactobacillus reuteri subsp. reuteri (strain JCM 1112) (Lactobacillus reuteri)).